A 65-amino-acid polypeptide reads, in one-letter code: Sec-independent protein translocase protein TatA (65 aa).

Residues 1-21 traverse the membrane as a helical segment; the sequence is MFGLGGQELVLILLIILLLFG.

This sequence belongs to the TatA/E family. In terms of assembly, forms a complex with TatC.

The protein resides in the cell inner membrane. Part of the twin-arginine translocation (Tat) system that transports large folded proteins containing a characteristic twin-arginine motif in their signal peptide across membranes. TatA could form the protein-conducting channel of the Tat system. The sequence is that of Sec-independent protein translocase protein TatA from Chlorobium phaeobacteroides (strain DSM 266 / SMG 266 / 2430).